We begin with the raw amino-acid sequence, 243 residues long: Protein Thf1 (243 aa).

Positions Ser180–Leu224 form a coiled coil. Over residues Glu210–Glu220 the composition is skewed to basic and acidic residues. The disordered stretch occupies residues Glu210–Ser243. Over residues Ser221–Ser243 the composition is skewed to polar residues.

Belongs to the THF1 family.

Functionally, may be involved in photosynthetic membrane biogenesis. The polypeptide is Protein Thf1 (Prochlorococcus marinus (strain MIT 9313)).